The chain runs to 1679 residues: [F-actin]-monooxygenase mical2b (1679 aa).

The monooxygenase domain stretch occupies residues 2–494; it reads GETEEERTSQ…RHLFISGEQD (493 aa). Residues Cys-97, 97 to 125, Glu-116, Arg-118, Arg-123, Asn-125, and Asp-398 each bind FAD; that span reads CGFR…SRNN. Residues 516 to 619 form the Calponin-homology (CH) domain; that stretch reads EVRPGRLLLW…MVLYLSKFYE (104 aa). Positions 658-679 match the Nuclear localization signal motif; sequence RKRIPKLDKKLEESDVNRKRKK. Disordered regions lie at residues 661-772, 818-838, 874-907, 1073-1163, 1194-1247, 1259-1283, 1302-1342, and 1473-1509; these read IPKL…KAKW, SAYK…TPTL, SSLF…ESST, STRH…RSTA, KPED…DEIP, EYPK…ISFS, DLTN…PAPP, and RNKA…KKKE. 2 stretches are compositionally biased toward basic and acidic residues: residues 662–674 and 697–707; these read PKLD…SDVN and GEREEQKENKV. A compositionally biased stretch (polar residues) spans 874-888; sequence SSLFTGNPAQPQTDE. The region spanning 1011–1073 is the LIM zinc-binding domain; it reads DTCVFCQKRV…KMHFSQRKTS (63 aa). Residues 1086–1099 are compositionally biased toward low complexity; it reads IRSSSITISNHTST. Residues 1112-1123 show a composition bias toward polar residues; that stretch reads DSSTQQDLQTLP. A compositionally biased stretch (basic and acidic residues) spans 1133-1143; sequence EVKDSSKKADP. The segment covering 1144–1154 has biased composition (low complexity); it reads ADSAPACPDSP. The segment covering 1202 to 1211 has biased composition (acidic residues); the sequence is LAEEDGNSDF. Residues 1220–1242 show a composition bias toward polar residues; the sequence is SKKPSNPSTDSNCLPTKDNSSTP. The segment covering 1259-1270 has biased composition (low complexity); the sequence is EYPKPSSSSPEP. Over residues 1302–1325 the composition is skewed to polar residues; the sequence is DLTNPGKSGAEEQQQQHVKPSISL. Pro residues predominate over residues 1333-1342; sequence THPQPEPAPP. The span at 1475–1489 shows a compositional bias: low complexity; the sequence is KASAQQQQQQKSNSS. The 151-residue stretch at 1517–1667 folds into the bMERB domain; the sequence is KSDELKRLHR…EKAEDRDLES (151 aa).

The protein belongs to the Mical family. FAD serves as cofactor.

The protein localises to the nucleus. The protein resides in the cytoplasm. It catalyses the reaction L-methionyl-[F-actin] + NADPH + O2 + H(+) = L-methionyl-(R)-S-oxide-[F-actin] + NADP(+) + H2O. Nuclear monooxygenase that promotes depolymerization of F-actin by mediating oxidation of specific methionine residues on actin and regulates the srf signaling. Acts by modifying nuclear actin subunits through the addition of oxygen to form methionine-sulfoxide, leading to promote actin filament severing and prevent repolymerization. Acts as a key regulator of the srf signaling pathway elicited by nerve growth factor and serum: mediates oxidation and subsequent depolymerization of nuclear actin, leading to increase mkl1/mrtf-a presence in the nucleus and promote srf:mkl1/mrtf-a-dependent gene transcription. The chain is [F-actin]-monooxygenase mical2b from Danio rerio (Zebrafish).